We begin with the raw amino-acid sequence, 449 residues long: XK-related protein 2 (449 aa).

A run of 10 helical transmembrane segments spans residues 35-55 (FSIL…LYMV), 68-88 (TYTF…LIFV), 98-118 (LSLF…EAMI), 174-194 (IQAF…SLIS), 202-222 (VVLM…CNML), 241-261 (LCIT…LVLF), 269-289 (AVPF…IKFW), 306-326 (VGTL…NFSC), 357-377 (LVEN…VLLN), and 382-402 (LIAL…LLFF).

Belongs to the XK family. As to expression, expressed predominantly in the placenta, in syncytiotrophoblasts. Moderate levels in the adrenal gland, low levels in the trachea and very low levels in the bone marrow.

The protein localises to the cell membrane. In Homo sapiens (Human), this protein is XK-related protein 2 (XKRX).